Reading from the N-terminus, the 307-residue chain is Estrogen receptor (307 aa).

The segment at residues Gly1–Lys43 is a DNA-binding region (nuclear receptor). The NR C4-type zinc-finger motif lies at Cys7 to Cys31. The tract at residues Asp44–Leu95 is hinge. In terms of domain architecture, NR LBD spans Thr96–Met307.

It belongs to the nuclear hormone receptor family. NR3 subfamily. As to quaternary structure, binds DNA as a homodimer. Can form a heterodimer with ER-beta.

It localises to the nucleus. In terms of biological role, the steroid hormones and their receptors are involved in the regulation of eukaryotic gene expression and affect cellular proliferation and differentiation in target tissues. In Aspidoscelis uniparens (Desert grassland whiptail lizard), this protein is Estrogen receptor (ESR1).